The sequence spans 334 residues: Nucleoid-associated protein YejK (334 aa).

Belongs to the YejK family.

Its subcellular location is the cytoplasm. It is found in the nucleoid. In Escherichia fergusonii (strain ATCC 35469 / DSM 13698 / CCUG 18766 / IAM 14443 / JCM 21226 / LMG 7866 / NBRC 102419 / NCTC 12128 / CDC 0568-73), this protein is Nucleoid-associated protein YejK.